Reading from the N-terminus, the 322-residue chain is UDP-N-acetylenolpyruvoylglucosamine reductase (322 aa).

The 167-residue stretch at 36-202 (RAGGPAQVLF…TSVLFEGVPG (167 aa)) folds into the FAD-binding PCMH-type domain. Residue Arg182 is part of the active site. Residue Ser231 is the Proton donor of the active site. The active site involves Glu301.

It belongs to the MurB family. FAD is required as a cofactor.

Its subcellular location is the cytoplasm. The enzyme catalyses UDP-N-acetyl-alpha-D-muramate + NADP(+) = UDP-N-acetyl-3-O-(1-carboxyvinyl)-alpha-D-glucosamine + NADPH + H(+). Its pathway is cell wall biogenesis; peptidoglycan biosynthesis. Functionally, cell wall formation. The protein is UDP-N-acetylenolpyruvoylglucosamine reductase of Brucella melitensis biotype 2 (strain ATCC 23457).